The chain runs to 210 residues: MKQGVFVAIEGVDGAGKTVLLEAFKQRFPQSFLGFKTLFSREPGGTPLAEKIRALLLHEAMEPLTEAYLFAASRTEHVRQLIQPALQQKQLVIVDRFVWSSYAYQGLIKKVGLDVVKKLNADAVGDSMPDFTFIVDCDFETALNRMAKRGQDNLLDNTVKKQADFNTMRQYYHSLVDNKRVFLLDGQNQTGCLEQFIEQLSQCLTQPTLS.

11–18 lines the ATP pocket; it reads GVDGAGKT.

It belongs to the thymidylate kinase family.

It carries out the reaction dTMP + ATP = dTDP + ADP. In terms of biological role, phosphorylation of dTMP to form dTDP in both de novo and salvage pathways of dTTP synthesis. The chain is Thymidylate kinase (tmk) from Mycoplasma pneumoniae (strain ATCC 29342 / M129 / Subtype 1) (Mycoplasmoides pneumoniae).